Consider the following 409-residue polypeptide: MDKLLERFLNYVSLDTQSKAGVRQVPSTEGQWKLLHLLKEQLEEMGLINVTLSEKGTLMATLPANVPGNIPAIGFISHVDTSPDCSGKNVNPQIVENYRGGDIALGIGDEVLSPVMFPVLHQLLGQTLITTDGKTLLGADDKAGIAEIMTALAVLQQKNIPHGDIRVAFTPDEEVGKGAKHFDVDAFDARWAYTVDGGGVGELEFENFNAASVNIKIVGNNVHPGTAKGVMVNALSLAARIHAEVPADESPEMTEGYEGFYHLASMKGTVDRADMHYIIRDFDRKQFEARKRKMMEIAKKVGKGLHPDCYIELVIEDSYYNMREKVVEHPHIIDIAQQAMRDCDIEPELKPIRGGTDGAQLSFMGLPCPNLFTGGYNYHGKHEFVTLEGMEKAVQVIVRIAELTAQRKS.

H78 contributes to the Zn(2+) binding site. D80 is an active-site residue. D140 lines the Zn(2+) pocket. Catalysis depends on E173, which acts as the Proton acceptor. Zn(2+)-binding residues include E174, D196, and H379.

The protein belongs to the peptidase M20B family. Zn(2+) is required as a cofactor.

Its subcellular location is the cytoplasm. It carries out the reaction Release of the N-terminal residue from a tripeptide.. In terms of biological role, cleaves the N-terminal amino acid of tripeptides. In Escherichia coli (strain SE11), this protein is Peptidase T.